Reading from the N-terminus, the 179-residue chain is MLTRQQKELIVKEMSEIFKKTSLILFADFLGFTVADLTELRSRLREKYGDGARFRVVKNTLLNLALKNAEYEGYEEFLKGPTAVLYVTEGDPVEAVKIIYNFYKDKKADLSRLKGGFLEGKKFTAEEVENIAKLPSKEELYAMLVGRVKAPITGLVFALSGILRNLVYVLNAIKEKKSE.

The interval 137 to 179 (KEELYAMLVGRVKAPITGLVFALSGILRNLVYVLNAIKEKKSE) is binds L7/L12 dimers.

Part of the ribosomal stalk of the 50S ribosomal subunit. The N-terminus interacts with L11 and 23S rRNA to form the base of the stalk. The C-terminus forms an elongated spine to which 3 L12 dimers bind in a sequential fashion forming a heptameric L10(L12)2(L12)2(L12)2 complex.

Functionally, forms part of the ribosomal stalk, playing a central role in the interaction of the ribosome with GTP-bound translation factors (such as IF-2, EF-Tu, EF-G and RF3). The sequence is that of Large ribosomal subunit protein uL10 (rplJ) from Thermotoga maritima (strain ATCC 43589 / DSM 3109 / JCM 10099 / NBRC 100826 / MSB8).